Reading from the N-terminus, the 354-residue chain is Protein NDH-DEPENDENT CYCLIC ELECTRON FLOW 5 (354 aa).

The transit peptide at 1-49 directs the protein to the chloroplast; that stretch reads MALVHYMNVSRSTFPLSRSSKINLSSSFASLPLQFHKNIKRLESSVPPS.

Its subcellular location is the plastid. The protein localises to the chloroplast thylakoid membrane. Required for both formation and activity of the chloroplast NAD(P)H dehydrogenase (NDH) complex of the photosynthetic electron transport chain. May function in assembly or stabilization of the NDH complex. In Arabidopsis thaliana (Mouse-ear cress), this protein is Protein NDH-DEPENDENT CYCLIC ELECTRON FLOW 5.